The chain runs to 82 residues: Small ribosomal subunit protein bS16 (82 aa).

This sequence belongs to the bacterial ribosomal protein bS16 family.

The polypeptide is Small ribosomal subunit protein bS16 (Histophilus somni (strain 2336) (Haemophilus somnus)).